The following is a 1085-amino-acid chain: MPVSMAVCETANVVNAALRESLGGNSSAAGSSADQAKSGEESNGSLQNHIVANAKRILMAKIEYEEVPNYHESVLESLKSKYIVIKPGNPGAINGFGGKNNTGKVVGANGHDNNGARKQAEHPNNQSHHNNHNNHPHPTSNPNELPKPKRVLYPRENIRIGWKQSERKWQVGTGMINVGNTCYLNSTLQALLHIPALANWLVSEQAHLENCNVAESGGGCIVCAMAKTLLATQSNQSAVRPFLIYSKLKQICKHMVVGRQEDAHEFLRFLVEAMERAYLMRFRNYKELDQLVKETTPLGQIFGGYLRSEVRCLSCNHVSITFQHFQDLLLDIRKADTLEDAFEGHFSRERLEDMGYKCEGCKKKVSATKQFSLERAPITLCIQLKRFSMIGNKLTKQISFKPRIDLSKYAARSPAAQAQPLTYRLVSMVTHLGVSQHCGHYTAIGSTDTGSYYNFDDSYVRPIAMQSVCNTNAYIMFYELDLSQTASPAANRPNGMRLTNGHSTTPVPATTVSSPSPTRFIGPQLPPGGVNGYSNGNAQKTAIQFKQHHQQSQQNGFQLGTGKFQDTAKPPLVGAHAKGEANPAPTANGNKSSSTSSNNSSSSNHKSINQQQYLPISSEDEDSEDERTSRPSTVQLPSMPKMTDDHTEKPKSPVKIQAKTPIKTPLKSLVPYESASEEEEAPLPNPRKRRSGEDSSESDQESGQTNGHSKTNGSLTNGSASSSVHVNNSKLKTDAIDEIFKSLKKSADSDDDDDEEESSIQLTNGWHPQKQSQSQSKAPPSPKTPPSPAVIKSKTGIWKVTRNDEVDDIDDDDDEEEEATVKIQTPSKTHRNPFSSSKPSTDSPATPGAKRQKLLNGSPVKSHQQPRVGNGYQSEATSNGSTINELLKQSHRGYGSSVLSWNGKPAELEKETFELVCAKRIAGHGSVDGSDIVESSVAVNASSGSDSNDVVVIAVALLVDAREQRQRDLDDDEENEMDRGRQRKVKSGSAKGNNASNSTPGYNPFQEYEGQKRWNKNGGGGGGFPRFYNQNFRQNFQQRNKFKFNRFGGPGGAKFQQQRALQRHLAAGGGFSRRQPSAQQQQQQS.

Positions 23-36 (GGNSSAAGSSADQA) are enriched in low complexity. 2 disordered regions span residues 23–47 (GGNSSAAGSSADQAKSGEESNGSLQ) and 104–149 (KVVG…PKPK). Residues 173 to 481 (TGMINVGNTC…NAYIMFYELD (309 aa)) enclose the USP domain. Cys182 (nucleophile) is an active-site residue. Catalysis depends on His440, which acts as the Proton acceptor. 4 disordered regions span residues 489–730 (AANR…NNSK), 745–888 (KSAD…ELLK), 963–1030 (EQRQ…FYNQ), and 1043–1085 (KFNR…QQQS). The segment covering 503–518 (STTPVPATTVSSPSPT) has biased composition (low complexity). Residues Ser514 and Ser516 each carry the phosphoserine modification. Polar residues predominate over residues 532 to 542 (GYSNGNAQKTA). Residues 588–609 (NGNKSSSTSSNNSSSSNHKSIN) show a composition bias toward low complexity. The span at 642–651 (MTDDHTEKPK) shows a compositional bias: basic and acidic residues. Phosphothreonine occurs at positions 660 and 664. Phosphoserine is present on residues Ser674 and Ser676. A compositionally biased stretch (polar residues) spans 705–730 (TNGHSKTNGSLTNGSASSSVHVNNSK). Position 749 is a phosphoserine (Ser749). Residues 749–758 (SDDDDDEEES) show a composition bias toward acidic residues. A compositionally biased stretch (low complexity) spans 768–778 (PQKQSQSQSKA). Residues 779–788 (PPSPKTPPSP) are compositionally biased toward pro residues. Ser781 carries the post-translational modification Phosphoserine. Thr784 carries the post-translational modification Phosphothreonine. Ser787 bears the Phosphoserine mark. The span at 805-818 (EVDDIDDDDDEEEE) shows a compositional bias: acidic residues. Polar residues predominate over residues 822-844 (KIQTPSKTHRNPFSSSKPSTDSP). At Thr825 the chain carries Phosphothreonine. Phosphoserine is present on Ser843. Thr846 carries the phosphothreonine modification. A compositionally biased stretch (polar residues) spans 859–884 (PVKSHQQPRVGNGYQSEATSNGSTIN). 2 stretches are compositionally biased toward low complexity: residues 987–998 (SGSAKGNNASNS) and 1056–1066 (QQQRALQRHLA).

The protein belongs to the peptidase C19 family. In terms of assembly, interacts with atms/PAF1, but not with CycT.

It localises to the nucleus. The protein localises to the nucleolus. The catalysed reaction is Thiol-dependent hydrolysis of ester, thioester, amide, peptide and isopeptide bonds formed by the C-terminal Gly of ubiquitin (a 76-residue protein attached to proteins as an intracellular targeting signal).. Its function is as follows. Required for maintaining multiple types of adult stem cells, including male and female germline, epithelial follicle cell and intestinal stem cells. May function as a transcriptional repressor by continually deubiquiting histone H2B at the promoters of genes critical for cellular differentiation, thereby preventing histone H3 'Lys-4' trimethylation (H3K4). Controls selective autophagy activation by ubiquitinated proteins. This chain is Ubiquitin carboxyl-terminal hydrolase 36 (Usp36), found in Drosophila erecta (Fruit fly).